The sequence spans 656 residues: UvrABC system protein C (656 aa).

Residues 41 to 120 (KSSGCYLFKD…IKTNKPYFNI (80 aa)) form the GIY-YIG domain. A UVR domain is found at 230–265 (DDLEVFLERKMNQYSNDLEFENAAKIRDQISGLKLL).

It belongs to the UvrC family. In terms of assembly, interacts with UvrB in an incision complex.

It is found in the cytoplasm. In terms of biological role, the UvrABC repair system catalyzes the recognition and processing of DNA lesions. UvrC both incises the 5' and 3' sides of the lesion. The N-terminal half is responsible for the 3' incision and the C-terminal half is responsible for the 5' incision. The protein is UvrABC system protein C of Prochlorococcus marinus subsp. pastoris (strain CCMP1986 / NIES-2087 / MED4).